The following is a 372-amino-acid chain: Queuine tRNA-ribosyltransferase (372 aa).

Asp92 serves as the catalytic Proton acceptor. Residues 92–96, Asp146, Gln188, and Gly215 contribute to the substrate site; that span reads DSGGF. An RNA binding region spans residues 246–252; sequence GIGTLRE. Asp265 serves as the catalytic Nucleophile. The interval 270 to 274 is RNA binding; important for wobble base 34 recognition; that stretch reads TRLGR. 4 residues coordinate Zn(2+): Cys303, Cys305, Cys308, and His334.

It belongs to the queuine tRNA-ribosyltransferase family. Homodimer. Within each dimer, one monomer is responsible for RNA recognition and catalysis, while the other monomer binds to the replacement base PreQ1. Zn(2+) is required as a cofactor.

It catalyses the reaction 7-aminomethyl-7-carbaguanine + guanosine(34) in tRNA = 7-aminomethyl-7-carbaguanosine(34) in tRNA + guanine. The protein operates within tRNA modification; tRNA-queuosine biosynthesis. In terms of biological role, catalyzes the base-exchange of a guanine (G) residue with the queuine precursor 7-aminomethyl-7-deazaguanine (PreQ1) at position 34 (anticodon wobble position) in tRNAs with GU(N) anticodons (tRNA-Asp, -Asn, -His and -Tyr). Catalysis occurs through a double-displacement mechanism. The nucleophile active site attacks the C1' of nucleotide 34 to detach the guanine base from the RNA, forming a covalent enzyme-RNA intermediate. The proton acceptor active site deprotonates the incoming PreQ1, allowing a nucleophilic attack on the C1' of the ribose to form the product. After dissociation, two additional enzymatic reactions on the tRNA convert PreQ1 to queuine (Q), resulting in the hypermodified nucleoside queuosine (7-(((4,5-cis-dihydroxy-2-cyclopenten-1-yl)amino)methyl)-7-deazaguanosine). This Prochlorococcus marinus (strain MIT 9313) protein is Queuine tRNA-ribosyltransferase.